Reading from the N-terminus, the 296-residue chain is Protoheme IX farnesyltransferase (296 aa).

The Cytoplasmic segment spans residues 1-9 (MMFKQYLQV). The helical transmembrane segment at 10–28 (TKPGIIFGNLISVIGGFLL) threads the bilayer. Topologically, residues 29–37 (ASKGSIDYP) are periplasmic. Residues 38 to 56 (LFIYTLVGVSLVVASGCVF) traverse the membrane as a helical segment. At 57–78 (NNYIDRDIDRKMERTKNRVLVK) the chain is on the cytoplasmic side. A helical transmembrane segment spans residues 79–97 (GLISPGVSLVYATLLGIAG). Over 98–107 (FMLLWFGANP) the chain is Periplasmic. A helical membrane pass occupies residues 108 to 126 (LACWLGVMGFVVYVGVYSL). The Cytoplasmic segment spans residues 127–197 (YMKRHSVYGT…YQAANIPVLP (71 aa)). A helical transmembrane segment spans residues 198–216 (VIKGISVAKNHITLYIIAF). Residues 217–228 (AVATLMLTLGGY) are Periplasmic-facing. The chain crosses the membrane as a helical span at residues 229–247 (AGYKYLVVAAAVSVWWLGM). Topologically, residues 248–268 (ALRGYKVEDDKVWARKLFGFS) are cytoplasmic. The chain crosses the membrane as a helical span at residues 269-287 (IIAITALSIMMSVDFMVPN). The Periplasmic portion of the chain corresponds to 288–296 (SQNLLTYVW).

Belongs to the UbiA prenyltransferase family. Protoheme IX farnesyltransferase subfamily.

It localises to the cell inner membrane. The catalysed reaction is heme b + (2E,6E)-farnesyl diphosphate + H2O = Fe(II)-heme o + diphosphate. It participates in porphyrin-containing compound metabolism; heme O biosynthesis; heme O from protoheme: step 1/1. Converts heme B (protoheme IX) to heme O by substitution of the vinyl group on carbon 2 of heme B porphyrin ring with a hydroxyethyl farnesyl side group. This chain is Protoheme IX farnesyltransferase, found in Salmonella typhi.